We begin with the raw amino-acid sequence, 260 residues long: Indole-3-glycerol phosphate synthase (260 aa).

The protein belongs to the TrpC family.

It catalyses the reaction 1-(2-carboxyphenylamino)-1-deoxy-D-ribulose 5-phosphate + H(+) = (1S,2R)-1-C-(indol-3-yl)glycerol 3-phosphate + CO2 + H2O. It participates in amino-acid biosynthesis; L-tryptophan biosynthesis; L-tryptophan from chorismate: step 4/5. The chain is Indole-3-glycerol phosphate synthase from Nocardioides sp. (strain ATCC BAA-499 / JS614).